A 550-amino-acid polypeptide reads, in one-letter code: Warthog protein 8 (550 aa).

The first 19 residues, 1–19 (MNYLLLVSGLLSVWQPVFG), serve as a signal peptide directing secretion.

This sequence belongs to the hedgehog family. The C-terminal domain displays an autoproteolysis activity.

It is found in the secreted. It localises to the cell surface. The protein localises to the cell membrane. The protein resides in the extracellular space. Functionally, intercellular signal essential for a variety of patterning events during development. This chain is Warthog protein 8 (wrt-8), found in Caenorhabditis elegans.